Here is a 635-residue protein sequence, read N- to C-terminus: Early transcription factor 70 kDa subunit (635 aa).

The Helicase ATP-binding domain maps to Arg-32–Glu-185. ATP is bound at residue His-45–Thr-52. Residues Asp-135–His-138 carry the DEXH box motif.

The protein belongs to the helicase family. VETF subfamily. As to quaternary structure, heterodimer of a 70 kDa and a 82 kDa subunit. Part of the early transcription complex composed of ETF, RAP94, and the DNA-directed RNA polymerase.

Its subcellular location is the virion. Functionally, acts with RNA polymerase to initiate transcription from early gene promoters. Is recruited by the RPO-associated protein of 94 kDa (RAP94) to form the early transcription complex, which also contains the core RNA polymerase. ETF heterodimer binds to early gene promoters. The protein is Early transcription factor 70 kDa subunit (VETFS) of Homo sapiens (Human).